The following is a 347-amino-acid chain: D-alanine--D-alanine ligase (347 aa).

The ATP-grasp domain maps to K131–D333. Residue E161–E216 participates in ATP binding. Residues D287, E300, and N302 each coordinate Mg(2+).

It belongs to the D-alanine--D-alanine ligase family. It depends on Mg(2+) as a cofactor. The cofactor is Mn(2+).

It is found in the cytoplasm. It catalyses the reaction 2 D-alanine + ATP = D-alanyl-D-alanine + ADP + phosphate + H(+). Its pathway is cell wall biogenesis; peptidoglycan biosynthesis. Its function is as follows. Cell wall formation. The sequence is that of D-alanine--D-alanine ligase from Streptococcus pneumoniae (strain CGSP14).